The following is a 542-amino-acid chain: MNSNRSLLVMGLLLVSFLIFTQWQQDFNPEIQAQKQAQQQAQVASQSGDVPAASNANTVIAENATQGKTVTLESDVLRLTIDTLGGDVIASDLLAHNAELNSQTPFKLLQTGATTYVAQSGLVGKNGIDTNAGRPQYQVAQDTFVLAEGQNEMSVPMTFEKDGVLYTKTFVLKRGSYDVAVNFNVKNQTAATVEVQPYGQIKHTLLESSGSLTMPTYTGGAYSSAETNYKKYSFQDMEKANLDINTKAGWVALLQHYFVSAWVPNQDAENTIYSRTNNGIATIGYRGPVTTIAPNSEATITSQLWTGPKDQKEMEATAANLDLTVDYGWAWFIAKPLFALLTFIQSIVTNWGLAIIGVTIVVKTILYPLTKAQYTSMARMRMLQPKIQEMRERFGDDRQRMSQEMMKLYKEEKVNPMGGCLPILIQMPIFIALYWTFMEAVELRHAPFFGWIQDLSAQDPYYILPLLMGASMFLLQKMSPSPVTDPVQQKVMTFMPVMFTVFFLWFPSGLVLYWLTSNIITIVQQWLIYRNLEKKGLHSRKK.

5 helical membrane passes run 7–27 (LLVMGLLLVSFLIFTQWQQDF), 338–358 (FALLTFIQSIVTNWGLAIIGV), 417–437 (MGGCLPILIQMPIFIALYWTF), 455–475 (LSAQDPYYILPLLMGASMFLL), and 494–514 (FMPVMFTVFFLWFPSGLVLYW).

The protein belongs to the OXA1/ALB3/YidC family. Type 1 subfamily. As to quaternary structure, interacts with the Sec translocase complex via SecD. Specifically interacts with transmembrane segments of nascent integral membrane proteins during membrane integration.

Its subcellular location is the cell inner membrane. In terms of biological role, required for the insertion and/or proper folding and/or complex formation of integral membrane proteins into the membrane. Involved in integration of membrane proteins that insert both dependently and independently of the Sec translocase complex, as well as at least some lipoproteins. Aids folding of multispanning membrane proteins. The polypeptide is Membrane protein insertase YidC (Actinobacillus pleuropneumoniae serotype 7 (strain AP76)).